We begin with the raw amino-acid sequence, 1036 residues long: Vacuolar basic amino acid transporter VSB1 (1036 aa).

At 1–213 (MGRTIRRRRS…SKFAHYLPAA (213 aa)) the chain is on the vacuolar side. A phosphoserine mark is found at serine 42 and serine 127. Phosphothreonine is present on threonine 130. A phosphoserine mark is found at serine 140, serine 144, serine 149, serine 152, and serine 153. Residues 214 to 234 (VLGLLLNILDALSYGMIIFPI) form a helical membrane-spanning segment. The Cytoplasmic portion of the chain corresponds to 235-236 (TE). Residues 237 to 257 (PVFSHLGPTGISMFYISTIIS) traverse the membrane as a helical segment. At 258–269 (QAVYSGGWSSFP) the chain is on the vacuolar side. A helical membrane pass occupies residues 270 to 290 (SGIGSEMIEITPFYHTMALAI). Topologically, residues 291-300 (KEALAGNDDE) are cytoplasmic. The chain crosses the membrane as a helical span at residues 301 to 321 (IITTTIFCYVISSMLTGVVFY). Over 322–338 (ALGKLRLGKIVGFFPRH) the chain is Vacuolar. A helical transmembrane segment spans residues 339-359 (ILIGCIGGVGYFLIITGIEVT). Residues 360-375 (TRVAKFEYSWPFFSGL) are Cytoplasmic-facing. A helical transmembrane segment spans residues 376-396 (FTDYDTLAKWLLPVLLTVVLI). Topologically, residues 397–405 (GTQRYFKNS) are vacuolar. A helical membrane pass occupies residues 406 to 426 (LVLPSFYILTLVLFHFIVAII). Residues 427–473 (PTLSLDALRQAGWIFPIANSDSKWYDHYRLFNVHKVHWSLVLQQIPT) are Cytoplasmic-facing. A helical membrane pass occupies residues 474–494 (MMALTFFGILHVPINVPALAM). Residues 495-515 (SLQMDKYDVDRELIAHGYSNF) lie on the Vacuolar side of the membrane. Residues 516-536 (FSGLLGSVQNYLVYTNSVLFI) traverse the membrane as a helical segment. Residues 537–546 (RAGADSPFAG) lie on the Cytoplasmic side of the membrane. The helical transmembrane segment at 547–567 (FLLIALTICIMIIGPVIISFI) threads the bilayer. Proline 568 is a topological domain (vacuolar). Residues 569-589 (ICIVGSLIFLLGYELLVEALV) form a helical membrane-spanning segment. At 590 to 604 (DTWNKLNRFEYLTVV) the chain is on the cytoplasmic side. The chain crosses the membrane as a helical span at residues 605-625 (IIVFTMGIFDFVLGIIVGILI). Residues 626–664 (ACFSFLVDSTKLQTINGEYNGNVARSTVYRDYVQTKFLD) lie on the Vacuolar side of the membrane. One can recognise an STAS domain in the interval 660–781 (TKFLDGIGEQ…ADLNSALEWC (122 aa)). A helical membrane pass occupies residues 665–685 (GIGEQIYVLKLQNLLFFGTII). The Cytoplasmic portion of the chain corresponds to 686 to 1036 (SIEEKIERLL…ELLGYTLVSA (351 aa)). Serine 842 bears the Phosphoserine mark. Threonine 847 carries the post-translational modification Phosphothreonine.

It localises to the vacuole membrane. Amino acid transporter involved in vacuolar uptake of basic amino acids for storage during nitrogen replete condititions. May function as an amino acid/proton antiporter. This chain is Vacuolar basic amino acid transporter VSB1, found in Saccharomyces cerevisiae (strain ATCC 204508 / S288c) (Baker's yeast).